Consider the following 524-residue polypeptide: Nif-specific regulatory protein (524 aa).

The interval 1–182 is a domain; it reads MIHKSDSDTT…AQTIRLMILP (182 aa). One can recognise a GAF domain in the interval 35–176; sequence EASKTLQEVL…TVANLIAQTI (142 aa). Residues 212–481 form the Sigma-54 factor interaction domain; the sequence is MVGKSPAMRQ…DGWLDNSLDE (270 aa). ATP contacts are provided by residues 240–247 and 303–312; these read GESGTGKE and ADGGTLFLDE. Residues 482 to 524 form a C-terminal DNA-binding domain region; sequence RQRLIAALEKAGWVQAKAARLLGMTPRQVAYRIQIMDITMPRL. Positions 496–515 form a DNA-binding region, H-T-H motif; it reads QAKAARLLGMTPRQVAYRIQ.

Interacts with sigma-54.

Required for activation of most nif operons, which are directly involved in nitrogen fixation. In Klebsiella pneumoniae, this protein is Nif-specific regulatory protein (nifA).